We begin with the raw amino-acid sequence, 620 residues long: Protein AFR1 (620 aa).

Over residues 1–12 (MEGSYLSAQENQ) the composition is skewed to polar residues. The tract at residues 1–20 (MEGSYLSAQENQPIPERLIP) is disordered. Phosphoserine is present on residues Ser472 and Ser526.

This sequence to yeast YER158C.

Acts in conjunction with the alpha-factor receptor to promote morphogenesis and adaptation. The polypeptide is Protein AFR1 (AFR1) (Saccharomyces cerevisiae (strain ATCC 204508 / S288c) (Baker's yeast)).